We begin with the raw amino-acid sequence, 331 residues long: MPSLDDILKPVAEAVKNGKKVTFFNGAGISTGAGIPDFRSPDTGLYANLAKLNLPFAEAVFDIDFFKEDPKPFYTLAEELYPGNFAPTKFHHFIKLLQDQGSLKRVYTQNIDTLERLAGVEDKYIVEAHGSFASNHCVDCHKEMTTETLKTYMKDKKIPSCQHCEGYVKPDIVFFGEGLPVKFFDLWEDDCEDVEVAIVAGTSLTVFPFASLPGEVNKKCLRVLVNKEKVGTFKHEPRKSDIIALHDCDIVAEKLCTLLGLDDKLNEVYEKEKIKYSKAETKETKMHEIEDKLKEEAHLKEDKHTTKVDKKEKQNDANDKELEQLIDKLKI.

The 262-residue stretch at M1–D262 folds into the Deacetylase sirtuin-type domain. NAD(+) contacts are provided by residues G26–Y46 and Q109–D112. Residue H129 is the Proton acceptor of the active site. Zn(2+) contacts are provided by C137, C140, C161, and C164. NAD(+) is bound by residues G201–S203, N226–E228, and C248. A coiled-coil region spans residues Y276–I331. Residues E283 to D319 form a disordered region.

The protein belongs to the sirtuin family. Class I subfamily. It depends on Zn(2+) as a cofactor.

It localises to the cytoplasm. The protein localises to the nucleus. The enzyme catalyses N(6)-acetyl-L-lysyl-[protein] + NAD(+) + H2O = 2''-O-acetyl-ADP-D-ribose + nicotinamide + L-lysyl-[protein]. In terms of biological role, NAD-dependent histone deacetylase that is involved in nuclear silencing events. Derepresses subtelomeric silencing and increases repression in nucleolar (rDNA) silencing. Its function is negatively regulated by active nuclear export. In Candida albicans (strain SC5314 / ATCC MYA-2876) (Yeast), this protein is NAD-dependent protein deacetylase HST2 (HST2).